The following is a 216-amino-acid chain: Trimethylamine corrinoid protein 1 (216 aa).

Residues 1–92 (MASKEEIIAK…EMEKRKSETK (92 aa)) enclose the B12-binding N-terminal domain. The B12-binding domain occupies 94–216 (LGTVVIGTIE…VVSKVRAVLL (123 aa)). A methylcob(III)alamin-binding site is contributed by histidine 107.

It belongs to the methylamine corrinoid protein family. Can form a complex with MttB.

It participates in one-carbon metabolism; methanogenesis from trimethylamine. Functionally, acts probably as a methyl group carrier between MttB and either MtbA or MtaA. This Methanosarcina acetivorans (strain ATCC 35395 / DSM 2834 / JCM 12185 / C2A) protein is Trimethylamine corrinoid protein 1 (mttC1).